The sequence spans 232 residues: Thrombin-like enzyme BjussuSP-1 (232 aa).

Residues V1–A223 form the Peptidase S1 domain. 6 cysteine pairs are disulfide-bonded: C7/C138, C25/C41, C73/C230, C117/C184, C149/C163, and C174/C199. H40 functions as the Charge relay system in the catalytic mechanism. The N-linked (GlcNAc...) asparagine glycan is linked to N77. D85 acts as the Charge relay system in catalysis. A glycan (N-linked (GlcNAc...) asparagine) is linked at N129. S178 acts as the Charge relay system in catalysis.

It belongs to the peptidase S1 family. Snake venom subfamily. As to quaternary structure, monomer. N-glycosylated. Contains sialic acid residues. Deglycosylation reduces in 50% the formation of fibrin clot. Expressed by the venom gland.

The protein resides in the secreted. Inhibited by leupeptin, heparin, and 1.10-phenantroline. Functionally, thrombin-like enzyme that shows clotting activity upon human plasma. Shows specific fibrinogenolytic activity for Aalpha chain (FGA). Hydrolyzes fibrin, BAPNA and TAME, as well as chromogenic artificial substrates of the blood coagulation cascasde: S-27654 for factor X (F10), S-2302 for kallikrein (KLK), factor XIa (F11), and XIIa (F12), and S-2266 for kallikrein and factor XIa (F11). Subcutaneous injection into mice induces a mild edema. Intravenous and intramuscular injection reduce plasma fibrinogen concentration and increase the levels of fibrin(ogen) degradation products. Intramuscular injection also promotes an increase in the expression of proMMP-9, but is unable to activate it. The sequence is that of Thrombin-like enzyme BjussuSP-1 from Bothrops jararacussu (Jararacussu).